We begin with the raw amino-acid sequence, 617 residues long: Vacuolar protein sorting-associated protein 33B (617 aa).

Belongs to the STXBP/unc-18/SEC1 family. As to quaternary structure, interacts with vipas39. Widely expressed from 4 hours post-fertilization (hpf) to 24 hpf. At 48 hpf, localized to brain, retina, ear, liver and proximal intestine. This expression pattern is more pronounced at 72 hpf and persists through 5 days post-fertilization (dpf). At 3 dpf and 4 dpf, expression in the liver is predominantly in developing biliary epithelial cells. No expression detected in kidney or spinal cord.

Its subcellular location is the late endosome membrane. The protein localises to the lysosome membrane. May play a role in vesicle-mediated protein trafficking to lysosomal compartments and in membrane docking/fusion reactions of late endosomes/lysosomes. Required for proper trafficking and targeting of the collagen-modifying enzyme lysyl hydroxylase 3 (LH3) to intracellular collagen. Mediates phagolysosomal fusion in macrophages. Proposed to be involved in endosomal maturation implicating vipas39. In epithelial cells, the vps33b:vipas39 complex may play a role in the apical recycling pathway and in the maintenance of the apical-basolateral polarity. Plays a role in bile duct development. The sequence is that of Vacuolar protein sorting-associated protein 33B from Danio rerio (Zebrafish).